The chain runs to 540 residues: Solute carrier family 2, facilitated glucose transporter member 9 (540 aa).

The tract at residues Met-1–Arg-31 is disordered. At Met-1 to Asp-51 the chain is on the cytoplasmic side. Phosphoserine is present on Ser-9. The chain crosses the membrane as a helical span at residues Trp-52–Gly-72. Over Tyr-73–Thr-107 the chain is Extracellular. Asn-90 carries an N-linked (GlcNAc...) asparagine glycan. A helical membrane pass occupies residues Leu-108–Val-128. The Cytoplasmic portion of the chain corresponds to Lys-129 to Thr-140. The helical transmembrane segment at Leu-141–Ala-161 threads the bilayer. Residues Gly-162–Arg-171 are Extracellular-facing. Residues Phe-172–Ile-192 traverse the membrane as a helical segment. At Ser-193 to Ser-200 the chain is on the cytoplasmic side. The helical transmembrane segment at Leu-201–Leu-221 threads the bilayer. At Pro-222–Trp-231 the chain is on the extracellular side. Residues Pro-232–Leu-252 form a helical membrane-spanning segment. Topologically, residues Pro-253–Gln-316 are cytoplasmic. A helical transmembrane segment spans residues Val-317–Phe-337. Over Tyr-338–Pro-354 the chain is Extracellular. Residues Tyr-355 to Ile-375 traverse the membrane as a helical segment. Over Glu-376–Arg-381 the chain is Cytoplasmic. The helical transmembrane segment at Pro-382–Leu-402 threads the bilayer. Over Thr-403–Ser-415 the chain is Extracellular. The chain crosses the membrane as a helical span at residues Ile-416–Ile-436. Topologically, residues Leu-437–Phe-451 are cytoplasmic. Residues Ile-452–Ile-472 form a helical membrane-spanning segment. Over Gln-473 to Thr-478 the chain is Extracellular. The chain crosses the membrane as a helical span at residues Tyr-479–Leu-499. Topologically, residues Pro-500–Pro-540 are cytoplasmic. Ser-515 is modified (phosphoserine). The interval Lys-519–Pro-540 is disordered.

The protein belongs to the major facilitator superfamily. Sugar transporter (TC 2.A.1.1) family. Glucose transporter subfamily. Most strongly expressed in basolateral membranes of proximal renal tubular cells, liver and placenta. Also detected in lung, blood leukocytes, heart skeletal muscle and chondrocytes from articular cartilage. Detected in kidney membrane (at protein level). In terms of tissue distribution, only detected in the apical membranes of polarized renal tubular cells and placenta. Detected in kidney membrane (at protein level).

The protein resides in the cell membrane. The protein localises to the basolateral cell membrane. It is found in the apical cell membrane. The enzyme catalyses urate(out) = urate(in). Its activity is regulated as follows. Extracellular glucose and urate accelerate urate efflux. Intracellular urate, glucose and fructose accelerate urate influx. With respect to regulation, no effect of extracellular urate, glucose or fructose on urate efflux. Intracellular urate and fructose slightly accelerate urate influx. High-capacity urate transporter, which may play a role in the urate reabsorption by proximal tubules. May have a residual high-affinity, low-capacity glucose and fructose transporter activity. Transports urate at rates 45- to 60-fold faster than glucose. Does not transport galactose. May mediate small uptake of adenine but not of other nucleobases. In Homo sapiens (Human), this protein is Solute carrier family 2, facilitated glucose transporter member 9.